Reading from the N-terminus, the 141-residue chain is Transcription antitermination protein NusB (141 aa).

Belongs to the NusB family.

In terms of biological role, involved in transcription antitermination. Required for transcription of ribosomal RNA (rRNA) genes. Binds specifically to the boxA antiterminator sequence of the ribosomal RNA (rrn) operons. The protein is Transcription antitermination protein NusB of Neisseria meningitidis serogroup B (strain ATCC BAA-335 / MC58).